We begin with the raw amino-acid sequence, 356 residues long: Tungsten-containing aldehyde ferredoxin oxidoreductase cofactor-modifying protein (356 aa).

The region spanning 1–214 (MKYLYLEITS…PIVNELYKIA (214 aa)) is the Radical SAM core domain. Cys-12, Cys-16, and Cys-19 together coordinate [4Fe-4S] cluster.

The protein belongs to the radical SAM superfamily. Requires [4Fe-4S] cluster as cofactor.

Its function is as follows. Involved in the biosynthesis of a molybdopterin-based tungsten cofactor. The sequence is that of Tungsten-containing aldehyde ferredoxin oxidoreductase cofactor-modifying protein (cmo) from Pyrococcus furiosus (strain ATCC 43587 / DSM 3638 / JCM 8422 / Vc1).